The sequence spans 521 residues: Occludin (521 aa).

Residues Met-1 to Asn-20 are disordered. At Met-1 to Arg-66 the chain is on the cytoplasmic side. The region spanning Ser-60–Arg-267 is the MARVEL domain. A helical membrane pass occupies residues Ile-67–Trp-89. At Asp-90–Arg-133 the chain is on the extracellular side. A helical transmembrane segment spans residues Ala-134–Val-158. At Ile-159–Arg-168 the chain is on the cytoplasmic side. Residues Tyr-169 to Met-193 form a helical membrane-spanning segment. Residues Gly-194–Glu-241 lie on the Extracellular side of the membrane. Cys-214 and Cys-235 are oxidised to a cystine. Residues Ala-242–Val-263 traverse the membrane as a helical segment. At Lys-264–Pro-521 the chain is on the cytoplasmic side. Ser-300 bears the Phosphoserine mark. The tract at residues Ser-300 to Val-329 is disordered. Position 303 is a phosphothreonine (Thr-303). Residues Ser-311 and Ser-319 each carry the phosphoserine modification. Ser-338 is subject to Phosphoserine; by PKC; in vitro. Ser-358 carries the post-translational modification Phosphoserine. Residues Asp-361–Gly-405 form a disordered region. The segment covering Arg-366–Thr-375 has biased composition (polar residues). Tyr-367 bears the Phosphotyrosine mark. Residues Ser-368 and Ser-369 each carry the phosphoserine modification. Residues Ala-380 to Gly-389 show a composition bias toward basic residues. Positions Lys-390–Thr-399 are enriched in basic and acidic residues. 2 positions are modified to phosphotyrosine: Tyr-397 and Tyr-401. Phosphothreonine; by PKC/PRKCH is present on Thr-402. At Thr-403 the chain carries Phosphothreonine. Ser-407 carries the post-translational modification Phosphoserine. One can recognise an OCEL domain in the interval Glu-413–Pro-521. Residues Ser-424 to Gly-488 adopt a coiled-coil conformation. Ser-489 carries the post-translational modification Phosphoserine.

The protein belongs to the ELL/occludin family. In terms of assembly, interacts with TJP1/ZO1. Interacts with VAPA. Interacts with CLDN1, CLDN6, CLDN9, CLDN11, CLDN12 and CLDN17. Interacts with PLSCR1. Interacts with LSR, ILDR1 and ILDR2. Interacts with TJP2/ZO2. Post-translationally, dephosphorylated by PTPRJ. May be phosphorylated by PKC during translocation to cell-cell contacts. Localized at tight junctions of both epithelial and endothelial cells. Highly expressed in the testis, kidney, lung, liver and brain. Not detected in skeletal muscle, spleen and heart.

Its subcellular location is the cell membrane. It localises to the cell junction. The protein resides in the tight junction. Its function is as follows. May play a role in the formation and regulation of the tight junction (TJ) paracellular permeability barrier. In Mus musculus (Mouse), this protein is Occludin (Ocln).